Consider the following 1020-residue polypeptide: Mastermind-like protein 1 (1020 aa).

The tract at residues 1 to 97 is required for interaction with NOTCH proteins; the sequence is MVLPTCPMAE…PAPASAPAAA (97 aa). At S45 the chain carries Phosphoserine. Over residues 67 to 76 the composition is skewed to basic residues; it reads KAKRAGKHRQ. Residues 67–191 form a disordered region; it reads KAKRAGKHRQ…TAGKHSLGLD (125 aa). The segment covering 77–99 has biased composition (low complexity); sequence PPAAATAPVAAPAPASAPAAARL. Over residues 100-122 the composition is skewed to basic and acidic residues; that stretch reads DAADGPEHGRPVAHLHDTVKRSL. The span at 124 to 133 shows a compositional bias: polar residues; it reads SAASPQNGDQ. A phosphoserine mark is found at S127, S310, S321, and S367. 6 disordered regions span residues 335-522, 575-598, 663-686, 725-748, 794-866, and 888-959; these read GASS…YGNT, PFRSLVPPGQEQNPSSVPVAAPAA, EKQQFQRHLTRPPPQYQDPTQSTF, SMGPGHAPVSSLPSSSGQQDRGVA, QNAS…NPFT, and AMPS…RPGL. Polar residues predominate over residues 344–369; it reads DSPSLGSSQTLFHTTSQPGVDNSSPN. Residues 373–383 show a composition bias toward low complexity; it reads ASAQAQSAQRA. Over residues 399–410 the composition is skewed to polar residues; sequence ELSSAHQLQQIA. Residues 419–435 are compositionally biased toward low complexity; sequence LQNPQQAAPAPGPGQLA. Residues 491 to 515 show a composition bias toward polar residues; it reads PSHSNLLSHQSPSNLNQNPVNNQGS. Positions 588 to 598 are enriched in low complexity; that stretch reads PSSVPVAAPAA. The span at 794-818 shows a compositional bias: polar residues; sequence QNASTSAAYGQNSLGSASLSQQHSK. K827 is modified (N6-acetyllysine). Residues 837-864 show a composition bias toward polar residues; that stretch reads MGSQNASWQHQGMPNLSSQTSGNSSVNP. The span at 911–920 shows a compositional bias: low complexity; that stretch reads SAQQRNSAPA. Phosphoserine is present on S1019.

The protein belongs to the mastermind family. In terms of assembly, interacts (via N-terminus) with NOTCH1, NOTCH2, NOTCH3 and NOTCH4 (via ankyrin repeat region). Interacts (via N-terminus) with p53 (via DNA-binding region). Forms a DNA-binding complex with Notch proteins and RBPSUH/RBP-J kappa/CBF1. Also binds CREBBP/CBP and CDK8. Forms a complex with PRAG1, NOTCH1 and MAML1, in a MAML1-dependent manner. In terms of tissue distribution, at E9.5, strongly expressed in the telencephalon, first branchial arch, forelimb buds and somites. By 10.5 dpc, continuously expressed in brain and spinal cord. Also expressed in first and second branchial arches and limb buds. By 11.5 dpc, expression in CNS is weak but increases in mesodermal tissues. At 14.5 dpc, detected in epithelial cells in trachea, esophagus and proximal and distal tubules of the developing lungs.

It localises to the nucleus speckle. Functionally, acts as a transcriptional coactivator for NOTCH proteins. Has been shown to amplify NOTCH-induced transcription of HES1. Enhances phosphorylation and proteolytic turnover of the NOTCH intracellular domain in the nucleus through interaction with CDK8. Binds to CREBBP/CBP which promotes nucleosome acetylation at NOTCH enhancers and activates transcription. Induces phosphorylation and localization of CREBBP to nuclear foci. Plays a role in hematopoietic development by regulating NOTCH-mediated lymphoid cell fate decisions. This is Mastermind-like protein 1 from Mus musculus (Mouse).